The sequence spans 236 residues: Large ribosomal subunit protein uL3 (236 aa).

Residues 139–163 (ARDSSTTHEHHRHVGAIGQRKTPGK) are disordered.

The protein belongs to the universal ribosomal protein uL3 family. In terms of assembly, part of the 50S ribosomal subunit. Forms a cluster with proteins L14 and L19.

In terms of biological role, one of the primary rRNA binding proteins, it binds directly near the 3'-end of the 23S rRNA, where it nucleates assembly of the 50S subunit. This chain is Large ribosomal subunit protein uL3, found in Anaeromyxobacter sp. (strain Fw109-5).